The primary structure comprises 346 residues: Protein SHI RELATED SEQUENCE 5 (346 aa).

Residues 7–31 (LGGRDNNSNNNKQDHHQVDKDHHHQ) form a disordered region. Residues 18 to 31 (KQDHHQVDKDHHHQ) show a composition bias toward basic and acidic residues. Zn(2+) is bound by residues Cys-125, Cys-128, Cys-136, Cys-141, Cys-145, and Cys-152. A DNA-binding region (zn(2)-C6 fungal-type; degenerate) is located at residues 125–152 (CQDCGNQAKKDCPHMRCRTCCKSRGFHC). Positions 175-186 (SLQHHSASSRET) are enriched in polar residues. The segment at 175 to 215 (SLQHHSASSRETQNAKRLREASGGDNNDDKDHSGGGGSALA) is disordered. The span at 187–207 (QNAKRLREASGGDNNDDKDHS) shows a compositional bias: basic and acidic residues. The short motif at 269–272 (IGGH) is the Required for homo- and heterodimerization element.

It belongs to the SHI protein family.

It localises to the nucleus. In terms of biological role, transcription activator that binds DNA on 5'-ACTCTAC-3' and promotes auxin homeostasis-regulating gene expression (e.g. YUC genes), as well as genes affecting stamen development, cell expansion and timing of flowering. Synergistically with other SHI-related proteins, regulates gynoecium, stamen and leaf development in a dose-dependent manner, controlling apical-basal patterning. Promotes style and stigma formation, and influences vascular development during gynoecium development. May also have a role in the formation and/or maintenance of the shoot apical meristem (SAM). The chain is Protein SHI RELATED SEQUENCE 5 (SRS5) from Arabidopsis thaliana (Mouse-ear cress).